The chain runs to 122 residues: uncharacterized protein (122 aa).

Belongs to the IIV-6 115R family.

This is an uncharacterized protein from Acheta domesticus (House cricket).